The following is a 313-amino-acid chain: MNRLAVELPGLSLKNPIMPASGCFGFGREYARFYDLSVLGAIMIKATTKEPRFGNPTPRVAETPGGMLNAIGLQNPGLDKVLEEELPWLEQFDVPIIANIAGSTVEEYVEVAEAISQAPNVHALELNISCPNVKKGGIAFGTVPDVAAELTRLVKQVSAVPVYVKLSPNVTDIVAMAKAIEQAGADGLTMINTLVGMRIDVKTGRPILANGTGGLSGPAVKPIAIRMIYEVSQAVSIPIIGMGGIQTAEDVLEFFYAGASAVAVGTANFVDPFVCPTIIADLPALLDDLGIGHISECIGRSWKTGAHAVHCRA.

Residues serine 21 and 45-46 (KA) each bind FMN. Residues lysine 45 and 69–73 (NAIGL) contribute to the substrate site. Residues asparagine 99 and asparagine 127 each contribute to the FMN site. Residue asparagine 127 participates in substrate binding. The active-site Nucleophile is cysteine 130. FMN contacts are provided by lysine 165 and isoleucine 191. 192 to 193 (NT) contacts substrate. Residues glycine 217, 243–244 (GG), and 265–266 (GT) contribute to the FMN site.

The protein belongs to the dihydroorotate dehydrogenase family. Type 1 subfamily. In terms of assembly, heterotetramer of 2 PyrK and 2 PyrD type B subunits. It depends on FMN as a cofactor.

The protein resides in the cytoplasm. The enzyme catalyses (S)-dihydroorotate + NAD(+) = orotate + NADH + H(+). It functions in the pathway pyrimidine metabolism; UMP biosynthesis via de novo pathway; orotate from (S)-dihydroorotate (NAD(+) route): step 1/1. Its function is as follows. Catalyzes the conversion of dihydroorotate to orotate with NAD(+) as electron acceptor. This Geobacillus kaustophilus (strain HTA426) protein is Dihydroorotate dehydrogenase B (NAD(+)), catalytic subunit (pyrD).